The chain runs to 73 residues: Signaling peptide TAXIMIN 2 (73 aa).

An N-terminal signal peptide occupies residues 1 to 27; that stretch reads MGDCRPLGFLIGLPFALVALVLALVGA.

Confined to the vasculature of various organs, including seedling roots, leaves, cotyledons, sepals and petals. Also accumulates in root hair cells.

It localises to the secreted. In terms of biological role, signaling peptide involved in the regulation of lateral organs separation. The chain is Signaling peptide TAXIMIN 2 from Arabidopsis thaliana (Mouse-ear cress).